A 1251-amino-acid polypeptide reads, in one-letter code: Cyclic nucleotide-gated channel beta-1 (1251 aa).

Disordered regions lie at residues Met-1–Lys-75, Ile-121–Asp-151, Gln-172–Pro-252, and Glu-314–Ser-561. The Cytoplasmic portion of the chain corresponds to Met-1–Tyr-656. Residues Glu-23–Ser-50 show a composition bias toward acidic residues. The span at Gly-238 to Pro-247 shows a compositional bias: polar residues. Basic and acidic residues predominate over residues Glu-335–Glu-352. Residues Glu-353 to Thr-373 are compositionally biased toward acidic residues. A compositionally biased stretch (basic and acidic residues) spans Lys-404–Glu-423. Acidic residues predominate over residues Glu-424 to Glu-434. Over residues Lys-435–Glu-446 the composition is skewed to basic and acidic residues. Residues Ala-557 to Arg-567 are calmodulin-binding CaM1. An IQ-like motif is present at residues Leu-568–Arg-578. Residues Lys-585 to Glu-619 are disordered. A helical transmembrane segment spans residues Val-657–Trp-678. Residues Ala-679 to Asn-687 are Extracellular-facing. Residues Ile-688–Phe-709 traverse the membrane as a helical segment. Residues Gln-710–Asp-724 are Cytoplasmic-facing. The chain crosses the membrane as a helical span at residues Lys-725–Ser-744. Topologically, residues Leu-745–Leu-760 are extracellular. Residues Leu-761 to Phe-773 form a helical membrane-spanning segment. At Glu-774–Lys-785 the chain is on the cytoplasmic side. A helical transmembrane segment spans residues Ala-786 to Leu-808. The interval Ala-786–Ala-885 is ion conduction pathway. Residues Tyr-809–Ser-831 are Extracellular-facing. The next 2 helical transmembrane spans lie at Tyr-832–Ile-858 and Val-859–Gly-884. Over Ala-885 to Glu-1251 the chain is Cytoplasmic. Positions Ala-888–Gln-964 are C-linker. The tract at residues Arg-968–Leu-1084 is cyclic nucleotide-binding domain. Positions 1029, 1030, 1032, 1042, and 1043 each coordinate 3',5'-cyclic GMP. Arg-1042 contributes to the 3',5'-cyclic AMP binding site. Residues Gln-1148–Gln-1154 form a calmodulin-binding CaM2 region. Residues Leu-1151–Glu-1251 are disordered. The segment covering Pro-1183–Ala-1203 has biased composition (pro residues). The segment covering Met-1242–Glu-1251 has biased composition (basic and acidic residues).

It belongs to the cyclic nucleotide-gated cation channel (TC 1.A.1.5) family. CNGB1 subfamily. As to quaternary structure, the rod cyclic nucleotide-gated channel is a heterotetramer composed of CNGA1 and CNGB1 subunits with 3:1 stoichiometry. CNGA1:CNGB1 channel binds Ca(2+)-bound CALM1 via CaM1 and CaM2 regions of the CNGB1 subunit; this interaction modulates the affinity of the channel for cNMPs in response to intracellular Ca(2+) levels. The olfactory cyclic nucleotide-gated channel is a heterotetramer composed of CNGA2, CNGA4 and CNGB1 subunits with 2:1:1 stoichiometry.

It localises to the cell membrane. The protein resides in the cell projection. Its subcellular location is the cilium membrane. The enzyme catalyses Ca(2+)(in) = Ca(2+)(out). It carries out the reaction Na(+)(in) = Na(+)(out). The catalysed reaction is K(+)(in) = K(+)(out). It catalyses the reaction NH4(+)(in) = NH4(+)(out). The enzyme catalyses Rb(+)(in) = Rb(+)(out). It carries out the reaction Li(+)(in) = Li(+)(out). The catalysed reaction is Cs(+)(in) = Cs(+)(out). In terms of biological role, pore-forming subunit of the rod cyclic nucleotide-gated channel. Mediates rod photoresponses at dim light converting transient changes in intracellular cGMP levels into electrical signals. In the dark, cGMP levels are high and keep the channel open enabling a steady inward current carried by Na(+) and Ca(2+) ions that leads to membrane depolarization and neurotransmitter release from synaptic terminals. Upon photon absorption cGMP levels decline leading to channel closure and membrane hyperpolarization that ultimately slows neurotransmitter release and signals the presence of light, the end point of the phototransduction cascade. Pore-forming subunit of the olfactory cyclic nucleotide-gated channel. Operates in the cilia of olfactory sensory neurons where chemical stimulation of the odorant is converted to an electrical signal. Mediates odorant-induced cAMP-dependent Ca(2+) influx triggering neuron depolarization. The rise of intracellular Ca(2+) levels potentiates the olfactory response by activating Ca(2+)-dependent Cl(-) channels, but it also serves as a negative feedback signal to desensitize the channel for rapid adaptation to odorants. Conducts cGMP- and cAMP-gated ion currents, with permeability for monovalent and divalent cations. The selectivity for Ca(2+) over Na(+) increases with cGMP concentrations, whereas the selectivity among monovalent ions is independent of the cGMP levels. Functionally, high affinity rod photoreceptor phosphodiesterase (PDE6)-binding protein that modulates its catalytic properties: it is a regulator of spontaneous activation of rod PDE6, thereby serving to lower rod photoreceptor 'dark noise' and allowing these sensory cells to operate at the single photon detection limit. The sequence is that of Cyclic nucleotide-gated channel beta-1 from Homo sapiens (Human).